A 222-amino-acid chain; its full sequence is 7-cyano-7-deazaguanine synthase (222 aa).

Residue 11–21 (FSGGQDSTTCL) coordinates ATP. 4 residues coordinate Zn(2+): cysteine 187, cysteine 195, cysteine 198, and cysteine 201.

It belongs to the QueC family. Requires Zn(2+) as cofactor.

The catalysed reaction is 7-carboxy-7-deazaguanine + NH4(+) + ATP = 7-cyano-7-deazaguanine + ADP + phosphate + H2O + H(+). It participates in purine metabolism; 7-cyano-7-deazaguanine biosynthesis. In terms of biological role, catalyzes the ATP-dependent conversion of 7-carboxy-7-deazaguanine (CDG) to 7-cyano-7-deazaguanine (preQ(0)). This chain is 7-cyano-7-deazaguanine synthase, found in Actinobacillus pleuropneumoniae serotype 7 (strain AP76).